The chain runs to 100 residues: Insertion element IS600 uncharacterized 11 kDa protein (100 aa).

The protein belongs to the transposase 8 family.

The sequence is that of Insertion element IS600 uncharacterized 11 kDa protein from Shigella sonnei.